Consider the following 1016-residue polypeptide: Nonsense-mediated mRNA decay factor SMG5 (1016 aa).

Serine 2 carries the post-translational modification N-acetylserine. Residues serine 2 and serine 423 each carry the phosphoserine modification. Disordered regions lie at residues 408–561 (NPVP…PSEA) and 594–637 (PTTN…RSCR). Positions 449 to 466 (KSRKFSRLSCLRRRRHPP) are enriched in basic residues. Residues 594–603 (PTTNPHTSAS) are compositionally biased toward polar residues. Residues 619–628 (ASEEGSESEG) show a composition bias toward acidic residues. Residues 798-841 (QSEQESLLQQAQAQFRMAQEEARRNRLMRDMAQLRLQLEVSQLE) adopt a coiled-coil conformation. Residues 872–995 (RQLATSGRFI…GPMQAALQAA (124 aa)) form the PINc domain.

Interacts with TERT, PPP2CA and SMG1. Part of a complex that contains SMG1, SMG5, SMG7, PPP2CA, a short isoform of UPF3A (isoform UPF3AS, but not isoform UPF3AL) and phosphorylated UPF1. Not detected in complexes that contain unphosphorylated UPF1. In terms of tissue distribution, ubiquitous.

The protein resides in the cytoplasm. It is found in the nucleus. Functionally, plays a role in nonsense-mediated mRNA decay. Does not have RNase activity by itself. Promotes dephosphorylation of UPF1. Together with SMG7 is thought to provide a link to the mRNA degradation machinery involving exonucleolytic pathways, and to serve as an adapter for UPF1 to protein phosphatase 2A (PP2A), thereby triggering UPF1 dephosphorylation. Necessary for TERT activity. The chain is Nonsense-mediated mRNA decay factor SMG5 from Homo sapiens (Human).